Here is a 239-residue protein sequence, read N- to C-terminus: Cysteine-rich venom protein ophanin (239 aa).

An N-terminal signal peptide occupies residues 1–18; the sequence is MIAFTLLSLAAVLQQSFG. The SCP domain occupies 37–165; that stretch reads VDLHNSLRRS…EYSYFYVCQY (129 aa). 8 cysteine pairs are disulfide-bonded: Cys-74–Cys-152, Cys-91–Cys-166, Cys-147–Cys-163, Cys-185–Cys-192, Cys-188–Cys-197, Cys-201–Cys-234, Cys-210–Cys-228, and Cys-219–Cys-232. Residues 201–234 enclose the ShKT domain; the sequence is CTLYNEYTNCDSLVKQSSCQDEWIKSKCPASCFC.

In terms of tissue distribution, expressed by the venom gland.

The protein localises to the secreted. Functionally, weakly blocks contraction of smooth muscle elicited by high potassium-induced depolarization, but does not block caffeine-stimulated contraction. May target voltage-gated calcium channels on smooth muscle. This Ophiophagus hannah (King cobra) protein is Cysteine-rich venom protein ophanin.